The primary structure comprises 154 residues: Transcription antitermination protein NusB (154 aa).

Belongs to the NusB family.

Functionally, involved in transcription antitermination. Required for transcription of ribosomal RNA (rRNA) genes. Binds specifically to the boxA antiterminator sequence of the ribosomal RNA (rrn) operons. In Methylobacillus flagellatus (strain ATCC 51484 / DSM 6875 / VKM B-1610 / KT), this protein is Transcription antitermination protein NusB.